Reading from the N-terminus, the 449-residue chain is Protein cortex (449 aa).

WD repeat units lie at residues 108–148, 149–188, 198–237, 283–327, 345–382, and 386–425; these read TYSY…ISQG, YAEYQIQCCKFDPRGELLLLGTYMKTVEIHNNVKSKKIDS, NRNCSITAVDWSPTGNSFATGCSWGAVTSFTRAAKLISWR, DSDW…VRDT, TGELVLSMWNSDRAILHPKACSQLVVMSDPDTMVDQWG, and SGLDRVRTMVFSPDGTKLATATSDEDLIIWNFLPEDKKMK. The D-box signature appears at 386-397; sequence SGLDRVRTMVFS.

The protein belongs to the WD repeat CORT family.

Its subcellular location is the cytoplasm. In terms of biological role, controls wing pigmentation patterning by regulating scale cell development, thereby playing a key role in mimicry and crypsis. Probably acts as an activator of the anaphase promoting complex/cyclosome (APC/C) that promotes the ubiquitin ligase activity and substrate specificity of the APC/C. The protein is Protein cortex of Heliconius erato (Crimson patched longwing butterfly).